The chain runs to 179 residues: ATP synthase subunit delta (179 aa).

The protein belongs to the ATPase delta chain family. As to quaternary structure, F-type ATPases have 2 components, F(1) - the catalytic core - and F(0) - the membrane proton channel. F(1) has five subunits: alpha(3), beta(3), gamma(1), delta(1), epsilon(1). F(0) has three main subunits: a(1), b(2) and c(10-14). The alpha and beta chains form an alternating ring which encloses part of the gamma chain. F(1) is attached to F(0) by a central stalk formed by the gamma and epsilon chains, while a peripheral stalk is formed by the delta and b chains.

It localises to the cell inner membrane. F(1)F(0) ATP synthase produces ATP from ADP in the presence of a proton or sodium gradient. F-type ATPases consist of two structural domains, F(1) containing the extramembraneous catalytic core and F(0) containing the membrane proton channel, linked together by a central stalk and a peripheral stalk. During catalysis, ATP synthesis in the catalytic domain of F(1) is coupled via a rotary mechanism of the central stalk subunits to proton translocation. In terms of biological role, this protein is part of the stalk that links CF(0) to CF(1). It either transmits conformational changes from CF(0) to CF(1) or is implicated in proton conduction. The polypeptide is ATP synthase subunit delta (Acidithiobacillus ferrooxidans (strain ATCC 23270 / DSM 14882 / CIP 104768 / NCIMB 8455) (Ferrobacillus ferrooxidans (strain ATCC 23270))).